A 442-amino-acid polypeptide reads, in one-letter code: MRYLPLTPEDRAQMLGVIGAPDVDALFADVPAAARNPAIGLAPHAGELEVERELSGLAALNRAAGAGPFFCGAGAYRHHVPATVDHIIQRSEFLTSYTPYQPEIAQGTLQVLFEFQTQVARLTGLDVANASMYDGSTACAEAVMMAQRVTRREKAILSGGLHPHYAATTQTIAHAEGMEIVRQPAAIDAEAAVIEAIDAETACVVVQTPNVFGVVTDVSKIAEAAHAKGALLIVVTTEAVAYGLLKSPGEMGADIAVAEGQSIGNALNYGGPYVGLFACREKFVRNMPGRLCGETVDAEGRRGYVLTLSTREQHIRREKATSNICTNSGLCALAFSIHLSLLGGKGLSQLARVNHARARELKAAVEAAGLEVLTPRFFNEIAVRTKGPAADLVERLLADGVVAGVPFSRLDPGAGLDDVLLLCATETTTSDDIAALKDALAR.

It belongs to the GcvP family. N-terminal subunit subfamily. The glycine cleavage system is composed of four proteins: P, T, L and H. In this organism, the P 'protein' is a heterodimer of two subunits.

It catalyses the reaction N(6)-[(R)-lipoyl]-L-lysyl-[glycine-cleavage complex H protein] + glycine + H(+) = N(6)-[(R)-S(8)-aminomethyldihydrolipoyl]-L-lysyl-[glycine-cleavage complex H protein] + CO2. In terms of biological role, the glycine cleavage system catalyzes the degradation of glycine. The P protein binds the alpha-amino group of glycine through its pyridoxal phosphate cofactor; CO(2) is released and the remaining methylamine moiety is then transferred to the lipoamide cofactor of the H protein. In Phenylobacterium zucineum (strain HLK1), this protein is Probable glycine dehydrogenase (decarboxylating) subunit 1.